The primary structure comprises 514 residues: MSCPIDKRRPLIAFLRRLRDLGQPPRSVTSKAHVKRAPKEVPLCPLMTDGETRNVTSLPGPTNWPLLGSLLEIFWKGGLKKQHDTLAEYHKKYGQIFRMKLGSFDSVHLGSPSLLEALYRTESAHPQRLEIKPWKAYRDHRNEAYGLMILEGQEWQRVRSAFQKKLMKPVEIMKLDKKINEVLADFMGQIDELRDERGRIQDLYSELNKWSFESICLVLYEKRFGLLQKDTEEEALTFIAAIKTMMSTFGKMMVTPVELHKRLNTKVWQAHTLAWDTIFKSVKPCIDHRLERYSQQPGADFLCDIYQQDHLSKKELYAAVTELQLAAVETTANSLMWILYNLSRNPQVQQRLLREIQSVLPDNQTPRAEDVRNMPYLKACLKESMRLTPSVPFTTRTLDKPTVLGEYTLPKGTVLTLNTQVLGSSEDNFEDADKFRPERWLEKEKKINPFAHLPFGVGKRMCIGRRLAELQLHLALCWIIQKYNIVATDSEPVEMLHLGILVPSRELPIAFCPR.

The N-terminal 35 residues, 1–35 (MSCPIDKRRPLIAFLRRLRDLGQPPRSVTSKAHVK), are a transit peptide targeting the mitochondrion. Cysteine 462 is a binding site for heme.

Belongs to the cytochrome P450 family. Requires heme as cofactor.

It localises to the mitochondrion. It catalyses the reaction calcitriol + 2 reduced [adrenodoxin] + O2 + 2 H(+) = calcitetrol + 2 oxidized [adrenodoxin] + H2O. The enzyme catalyses calcitetrol + 2 reduced [adrenodoxin] + O2 + 2 H(+) = (1S)-1,25-dihydroxy-24-oxocalciol + 2 oxidized [adrenodoxin] + 2 H2O. It carries out the reaction (1S)-1,25-dihydroxy-24-oxocalciol + 2 reduced [adrenodoxin] + O2 + 2 H(+) = (1S)-1,23,25-trihydroxy-24-oxocalciol + 2 oxidized [adrenodoxin] + H2O. The catalysed reaction is (1S)-1,23-dihydroxy-24,25,26,27-tetranorcalciol + 2 reduced [adrenodoxin] + O2 + 2 H(+) = (1S)-1-hydroxy-23-oxo-24,25,26,27-tetranorcalciol + 2 oxidized [adrenodoxin] + 2 H2O. It catalyses the reaction (1S)-1-hydroxy-23-oxo-24,25,26,27-tetranorcalciol + 2 reduced [adrenodoxin] + O2 + H(+) = calcitroate + 2 oxidized [adrenodoxin] + H2O. The enzyme catalyses calcidiol + 2 reduced [adrenodoxin] + O2 + 2 H(+) = secalciferol + 2 oxidized [adrenodoxin] + H2O. It carries out the reaction secalciferol + 2 reduced [adrenodoxin] + O2 + 2 H(+) = 25-hydroxy-24-oxocalciol + 2 oxidized [adrenodoxin] + 2 H2O. The catalysed reaction is 25-hydroxy-24-oxocalciol + 2 reduced [adrenodoxin] + O2 + 2 H(+) = 23S,25-dihydroxy-24-oxocholecalciferol + 2 oxidized [adrenodoxin] + H2O. It catalyses the reaction 20S,23-dihydroxycholecalciferol + 2 reduced [adrenodoxin] + O2 + 2 H(+) = 20S,23,25-trihydroxycholecalciferol + 2 oxidized [adrenodoxin] + H2O. The enzyme catalyses 20S,23-dihydroxycholecalciferol + 2 reduced [adrenodoxin] + O2 + 2 H(+) = 20S,23,24-trihydroxycholecalciferol + 2 oxidized [adrenodoxin] + H2O. It carries out the reaction 20S-hydroxycholecalciferol + 2 reduced [adrenodoxin] + O2 + 2 H(+) = 20S,25-dihydroxycholecalciferol + 2 oxidized [adrenodoxin] + H2O. The catalysed reaction is 20S-hydroxycholecalciferol + 2 reduced [adrenodoxin] + O2 + 2 H(+) = 20S,24S-dihydroxycholecalciferol + 2 oxidized [adrenodoxin] + H2O. It catalyses the reaction 20S-hydroxycholecalciferol + 2 reduced [adrenodoxin] + O2 + 2 H(+) = 20S,24R-dihydroxycholecalciferol + 2 oxidized [adrenodoxin] + H2O. Functionally, a cytochrome P450 monooxygenase with a key role in vitamin D catabolism and calcium homeostasis. Via C24-oxidation pathway, catalyzes the inactivation of both the vitamin D precursor calcidiol (25-hydroxyvitamin D(3)) and the active hormone calcitriol (1-alpha,25-dihydroxyvitamin D(3)). With initial hydroxylation at C-24 (via C24-oxidation pathway), performs a sequential 6-step oxidation of calcitriol leading to the formation of the biliary metabolite calcitroic acid. Hydroxylates at C-24 or C-25 other vitamin D active metabolites, such as CYP11A1-derived secosteroids 20S-hydroxycholecalciferol and 20S,23-dihydroxycholecalciferol. Mechanistically, uses molecular oxygen inserting one oxygen atom into a substrate, and reducing the second into a water molecule, with two electrons provided by NADPH via FDXR/adrenodoxin reductase and FDX1/adrenodoxin. The polypeptide is 1,25-dihydroxyvitamin D(3) 24-hydroxylase, mitochondrial (Mus musculus (Mouse)).